The chain runs to 1478 residues: Phospholipase B1, membrane-associated (1478 aa).

A signal peptide spans 1–27 (MELYPGVSPVGLLLLLLLGQGPSQIHG). Over 28–1422 (SSGENTLAWQ…KAEEPSNALY (1395 aa)) the chain is Extracellular. Tandem repeats lie at residues 43–351 (WTLK…YKNS), 366–711 (MKEG…TKNS), 712–1058 (NLGN…FRNS), and 1068–1407 (IENW…LRNS). The interval 43 to 1407 (WTLKNFPFPC…RPFLYTLRNS (1365 aa)) is 4 X 308-326 AA approximate repeats. N-linked (GlcNAc...) asparagine glycosylation is present at N180. Catalysis depends on residues S404 and D518. N525, N626, and N637 each carry an N-linked (GlcNAc...) asparagine glycan. Residue H659 is part of the active site. Residues N715, N764, N787, N801, N830, N926, N1227, N1280, N1289, and N1387 are each glycosylated (N-linked (GlcNAc...) asparagine). Residues 1408 to 1450 (QLLPDKAEEPSNALYWAVPVAAIGGLAVGILGVMLWRTVKPVQ) are necessary for membrane localization. Residues 1423–1443 (WAVPVAAIGGLAVGILGVMLW) form a helical membrane-spanning segment. The Cytoplasmic segment spans residues 1444–1478 (RTVKPVQQEEEEEDTLPNTSVTQDAVSEKRLKAGN). The segment at 1451–1478 (QEEEEEDTLPNTSVTQDAVSEKRLKAGN) is disordered. The segment covering 1459–1468 (LPNTSVTQDA) has biased composition (polar residues). Residues 1469–1478 (VSEKRLKAGN) are compositionally biased toward basic and acidic residues.

This sequence belongs to the 'GDSL' lipolytic enzyme family. Phospholipase B1 subfamily. In terms of processing, undergoes proteolytic cleavage in the ileum.

It is found in the apical cell membrane. It catalyses the reaction a 1,2-diacyl-sn-glycero-3-phosphocholine + H2O = a 1-acyl-sn-glycero-3-phosphocholine + a fatty acid + H(+). The catalysed reaction is a 1-O-alkyl-2-acyl-sn-glycero-3-phosphocholine + H2O = a 1-O-alkyl-sn-glycero-3-phosphocholine + a fatty acid + H(+). The enzyme catalyses a 1-acyl-sn-glycero-3-phosphocholine + H2O = sn-glycerol 3-phosphocholine + a fatty acid + H(+). It carries out the reaction a triacylglycerol + H2O = a diacylglycerol + a fatty acid + H(+). It catalyses the reaction 1,2-dihexadecanoyl-sn-glycero-3-phosphocholine + H2O = 1-hexadecanoyl-sn-glycero-3-phosphocholine + hexadecanoate + H(+). The catalysed reaction is 1-hexadecanoyl-2-(9Z-octadecenoyl)-sn-glycero-3-phosphocholine + H2O = 1-hexadecanoyl-sn-glycero-3-phosphocholine + (9Z)-octadecenoate + H(+). The enzyme catalyses 1,2-di-(9Z-octadecenoyl)-sn-glycero-3-phosphocholine + H2O = 1-(9Z-octadecenoyl)-sn-glycero-3-phosphocholine + (9Z)-octadecenoate + H(+). It carries out the reaction 1-hexadecanoyl-2-(9Z,12Z-octadecadienoyl)-sn-glycero-3-phosphocholine + H2O = (9Z,12Z)-octadecadienoate + 1-hexadecanoyl-sn-glycero-3-phosphocholine + H(+). It catalyses the reaction 1-hexadecanoyl-2-(9Z,12Z-octadecadienoyl)-sn-glycero-3-phosphocholine + H2O = 2-(9Z,12Z-octadecadienoyl)-sn-glycero-3-phosphocholine + hexadecanoate + H(+). The catalysed reaction is 1-hexadecanoyl-2-(9Z-octadecenoyl)-sn-glycero-3-phosphoethanolamine + H2O = 1-hexadecanoyl-sn-glycero-3-phosphoethanolamine + (9Z)-octadecenoate + H(+). The enzyme catalyses 1-hexadecanoyl-2-(9Z-octadecenoyl)-sn-glycero-3-phospho-(1'-sn-glycerol) + H2O = 1-hexadecanoyl-sn-glycero-3-phospho-(1'-sn-glycerol) + (9Z)-octadecenoate + H(+). It carries out the reaction 1,2-dihexadecanoyl-sn-glycero-3-phosphocholine + 2 H2O = sn-glycerol 3-phosphocholine + 2 hexadecanoate + 2 H(+). It catalyses the reaction 1-O-hexadecyl-2-(9Z)-octadecenoyl-sn-glycero-3-phosphocholine + H2O = 1-O-hexadecyl-sn-glycero-3-phosphocholine + (9Z)-octadecenoate + H(+). The catalysed reaction is 1-hexadecanoyl-sn-glycero-3-phosphocholine + H2O = sn-glycerol 3-phosphocholine + hexadecanoate + H(+). The enzyme catalyses 1,2,3-tri-(9Z-octadecenoyl)-glycerol + H2O = di-(9Z)-octadecenoylglycerol + (9Z)-octadecenoate + H(+). It carries out the reaction 1-hexadecanoyl-2-(9Z)-octadecenoyl-3-octadecanoyl-sn-glycerol + H2O = 1-hexadecanoyl-2-(9Z-octadecenoyl)-sn-glycerol + octadecanoate + H(+). It catalyses the reaction 1,3-dihexadecanoyl-2-(9Z-octadecenoyl)glycerol + H2O = 1,3-dihexadecanoylglycerol + (9Z)-octadecenoate + H(+). The catalysed reaction is 1,3-dihexadecanoyl-2-(9Z-octadecenoyl)glycerol + H2O = 1-hexadecanoyl-2-(9Z-octadecenoyl)-glycerol + hexadecanoate + H(+). The enzyme catalyses 1-hexadecanoyl-2-(9Z)-octadecenoyl-3-octadecanoyl-sn-glycerol + H2O = 1-hexadecanoyl-3-octadecanoyl-sn-glycerol + (9Z)-octadecenoate + H(+). It carries out the reaction 1-hexadecanoyl-2-(9Z)-octadecenoyl-3-octadecanoyl-sn-glycerol + H2O = 2-(9Z-octadecenoyl)-3-octadecanoyl-sn-glycerol + hexadecanoate + H(+). It catalyses the reaction 1-octadecanoyl-2-(9Z,12Z)-octadecadienoyl-sn-glycerol + H2O = 1-octadecanoyl-sn-glycerol + (9Z,12Z)-octadecadienoate + H(+). The catalysed reaction is 1,2-di-(9Z-octadecenoyl)-sn-glycerol + H2O = 1-(9Z-octadecenoyl)-sn-glycerol + (9Z)-octadecenoate + H(+). The enzyme catalyses 2,3-di-(9Z)-octadecenoyl-sn-glycerol + H2O = 3-(9Z-octadecenoyl)-sn-glycerol + (9Z)-octadecenoate + H(+). It carries out the reaction 1,3-di-(9Z-octadecenoyl)-glycerol + H2O = 1-(9Z-octadecenoyl)-glycerol + (9Z)-octadecenoate + H(+). It catalyses the reaction 1-(9Z-octadecenoyl)-glycerol + H2O = glycerol + (9Z)-octadecenoate + H(+). The catalysed reaction is 2-(9Z-octadecenoyl)-glycerol + H2O = glycerol + (9Z)-octadecenoate + H(+). Functionally, calcium-independent membrane-associated phospholipase that catalyzes complete diacylation of phospholipids by hydrolyzing both sn-1 and sn-2 fatty acyl chains attached to the glycerol backbone (phospholipase B activity). Has dual phospholipase and lysophospholipase activities toward diacylphospholipids. Preferentially cleaves sn-2 ester bonds over sn-1 bonds. Acts as a lipase toward glycerolipid substrates. Hydrolyzes fatty acyl chains of diacylglycerols with preference for the sn-2 position and of triacylglycerols with not positional selectivity. May also hydrolyze long chain retinyl esters such as retinyl palmitate. May contribute to digestion of dietary phospholipids, glycerolipids and retinoids, facilitating lipid absorption at the brush border. This is Phospholipase B1, membrane-associated (Plb1) from Mus musculus (Mouse).